The chain runs to 374 residues: U-box domain-containing protein 8 (374 aa).

The U-box domain occupies 4-79 (DLPNDFRCPI…LNFAHVSLKE (76 aa)). ARM repeat units lie at residues 126-165 (SSIR…NLSL), 167-206 (DDNK…SLAV), 208-248 (EVNK…ALCS), 250-288 (PDNR…KCRG), and 289-327 (GREE…CLCC).

As to expression, expressed in the whole plant.

The catalysed reaction is S-ubiquitinyl-[E2 ubiquitin-conjugating enzyme]-L-cysteine + [acceptor protein]-L-lysine = [E2 ubiquitin-conjugating enzyme]-L-cysteine + N(6)-ubiquitinyl-[acceptor protein]-L-lysine.. It participates in protein modification; protein ubiquitination. Its function is as follows. Functions as an E3 ubiquitin ligase. Involved in the age-dependent pseudo-self-compatibility process. The polypeptide is U-box domain-containing protein 8 (PUB8) (Arabidopsis thaliana (Mouse-ear cress)).